Here is a 483-residue protein sequence, read N- to C-terminus: Glutamyl-tRNA(Gln) amidotransferase subunit A (483 aa).

Residues lysine 77 and serine 152 each act as charge relay system in the active site. The Acyl-ester intermediate role is filled by serine 176.

It belongs to the amidase family. GatA subfamily. Heterotrimer of A, B and C subunits.

The enzyme catalyses L-glutamyl-tRNA(Gln) + L-glutamine + ATP + H2O = L-glutaminyl-tRNA(Gln) + L-glutamate + ADP + phosphate + H(+). Functionally, allows the formation of correctly charged Gln-tRNA(Gln) through the transamidation of misacylated Glu-tRNA(Gln) in organisms which lack glutaminyl-tRNA synthetase. The reaction takes place in the presence of glutamine and ATP through an activated gamma-phospho-Glu-tRNA(Gln). This is Glutamyl-tRNA(Gln) amidotransferase subunit A from Listeria monocytogenes serotype 4b (strain CLIP80459).